A 389-amino-acid chain; its full sequence is Glutamate 5-kinase (389 aa).

Residue K16 coordinates ATP. Positions 56, 143, and 155 each coordinate substrate. Residue 175–176 participates in ATP binding; that stretch reads SD. Residues 281-358 form the PUA domain; that stretch reads AGELHVDEGA…AEIEAILGYA (78 aa).

It belongs to the glutamate 5-kinase family.

It is found in the cytoplasm. It catalyses the reaction L-glutamate + ATP = L-glutamyl 5-phosphate + ADP. It participates in amino-acid biosynthesis; L-proline biosynthesis; L-glutamate 5-semialdehyde from L-glutamate: step 1/2. Catalyzes the transfer of a phosphate group to glutamate to form L-glutamate 5-phosphate. This Rhizobium rhizogenes (strain K84 / ATCC BAA-868) (Agrobacterium radiobacter) protein is Glutamate 5-kinase.